We begin with the raw amino-acid sequence, 354 residues long: UDP-3-O-acylglucosamine N-acyltransferase (354 aa).

The active-site Proton acceptor is H258.

It belongs to the transferase hexapeptide repeat family. LpxD subfamily. As to quaternary structure, homotrimer.

It catalyses the reaction a UDP-3-O-[(3R)-3-hydroxyacyl]-alpha-D-glucosamine + a (3R)-hydroxyacyl-[ACP] = a UDP-2-N,3-O-bis[(3R)-3-hydroxyacyl]-alpha-D-glucosamine + holo-[ACP] + H(+). Its pathway is bacterial outer membrane biogenesis; LPS lipid A biosynthesis. In terms of biological role, catalyzes the N-acylation of UDP-3-O-acylglucosamine using 3-hydroxyacyl-ACP as the acyl donor. Is involved in the biosynthesis of lipid A, a phosphorylated glycolipid that anchors the lipopolysaccharide to the outer membrane of the cell. The chain is UDP-3-O-acylglucosamine N-acyltransferase from Sinorhizobium fredii (strain NBRC 101917 / NGR234).